The sequence spans 578 residues: Aspartate--tRNA ligase (578 aa).

Glutamate 169 contacts L-aspartate. Residues 191 to 194 (QTFK) are aspartate. An L-aspartate-binding site is contributed by arginine 213. ATP-binding positions include 213–215 (RDE) and glutamine 222. Residue histidine 440 participates in L-aspartate binding. Glutamate 474 lines the ATP pocket. Arginine 481 provides a ligand contact to L-aspartate. An ATP-binding site is contributed by 526 to 529 (GLDR).

It belongs to the class-II aminoacyl-tRNA synthetase family. Type 1 subfamily. Homodimer.

It is found in the cytoplasm. The catalysed reaction is tRNA(Asp) + L-aspartate + ATP = L-aspartyl-tRNA(Asp) + AMP + diphosphate. Functionally, catalyzes the attachment of L-aspartate to tRNA(Asp) in a two-step reaction: L-aspartate is first activated by ATP to form Asp-AMP and then transferred to the acceptor end of tRNA(Asp). In Ureaplasma parvum serovar 3 (strain ATCC 700970), this protein is Aspartate--tRNA ligase.